Consider the following 295-residue polypeptide: Pyrroline-5-carboxylate reductase (295 aa).

Belongs to the pyrroline-5-carboxylate reductase family.

It localises to the cytoplasm. The enzyme catalyses L-proline + NADP(+) = (S)-1-pyrroline-5-carboxylate + NADPH + 2 H(+). It carries out the reaction L-proline + NAD(+) = (S)-1-pyrroline-5-carboxylate + NADH + 2 H(+). The protein operates within amino-acid biosynthesis; L-proline biosynthesis; L-proline from L-glutamate 5-semialdehyde: step 1/1. Functionally, catalyzes the reduction of 1-pyrroline-5-carboxylate (PCA) to L-proline. This Mycobacterium tuberculosis (strain CDC 1551 / Oshkosh) protein is Pyrroline-5-carboxylate reductase.